We begin with the raw amino-acid sequence, 445 residues long: ATP synthase subunit b-delta (445 aa).

An ATP synthase subunit b region spans residues 1 to 168 (MSIFIGQLIG…PSSAVLEAGA (168 aa)). Residues 3–23 (IFIGQLIGFAVIVFILVKWVV) form a helical membrane-spanning segment. Residues 169 to 445 (SLNLRAASRE…LAAARTGLPD (277 aa)) are ATP synthase subunit delta.

In the N-terminal section; belongs to the ATPase B chain family. The protein in the C-terminal section; belongs to the ATPase delta chain family. In terms of assembly, F-type ATPases have 2 components, F(1) - the catalytic core - and F(0) - the membrane proton channel. F(1) has five subunits: alpha(3), beta(3), gamma(1), delta(1), epsilon(1). F(0) has three main subunits: a(1), b(2) and c(10-14). The alpha and beta chains form an alternating ring which encloses part of the gamma chain. F(1) is attached to F(0) by a central stalk formed by the gamma and epsilon chains, while a peripheral stalk is formed by the delta and b chains.

The protein resides in the cell membrane. Its function is as follows. F(1)F(0) ATP synthase produces ATP from ADP in the presence of a proton or sodium gradient. F-type ATPases consist of two structural domains, F(1) containing the extramembraneous catalytic core and F(0) containing the membrane proton channel, linked together by a central stalk and a peripheral stalk. During catalysis, ATP synthesis in the catalytic domain of F(1) is coupled via a rotary mechanism of the central stalk subunits to proton translocation. This fusion protein includes a component of the F(0) channel (subunit b) and of the F(1) subunit (subunit delta). Two copies of subunit b and one of delta together form the peripheral 'stator' stalk which links F(1) to F(0). The polypeptide is ATP synthase subunit b-delta (atpFH) (Mycolicibacterium vanbaalenii (strain DSM 7251 / JCM 13017 / BCRC 16820 / KCTC 9966 / NRRL B-24157 / PYR-1) (Mycobacterium vanbaalenii)).